Here is a 179-residue protein sequence, read N- to C-terminus: NADH dehydrogenase [ubiquinone] 1 beta subcomplex subunit 9 (179 aa).

A2 carries the N-acetylalanine modification. S85 carries the post-translational modification Phosphoserine. The segment at 136 to 162 is disordered; it reads EVKQLQEETPPGGPLTEALPPARKEGD.

Belongs to the complex I LYR family. In terms of assembly, mammalian complex I is composed of 45 different subunits.

It localises to the mitochondrion inner membrane. Accessory subunit of the mitochondrial membrane respiratory chain NADH dehydrogenase (Complex I), that is believed to be not involved in catalysis. Complex I functions in the transfer of electrons from NADH to the respiratory chain. The immediate electron acceptor for the enzyme is believed to be ubiquinone. The protein is NADH dehydrogenase [ubiquinone] 1 beta subcomplex subunit 9 (NDUFB9) of Pan troglodytes (Chimpanzee).